Here is an 83-residue protein sequence, read N- to C-terminus: Conotoxin p21a (83 aa).

4-hydroxyproline; partial is present on residues Pro-24 and Pro-43. His-83 bears the Histidine amide mark.

May form a non-covalent dimer. Post-translationally, contains 5 disulfide bonds. Expressed by the venom duct.

The protein resides in the secreted. The sequence is that of Conotoxin p21a from Conus purpurascens (Purple cone).